The following is a 346-amino-acid chain: Methionine import ATP-binding protein MetN (346 aa).

An ABC transporter domain is found at 2–243 (VRFEGISKTY…PKHPITQSFL (242 aa)). 40 to 47 (GRSGAGKS) contributes to the ATP binding site.

Belongs to the ABC transporter superfamily. Methionine importer (TC 3.A.1.24) family. The complex is composed of two ATP-binding proteins (MetN), two transmembrane proteins (MetI) and a solute-binding protein (MetQ).

The protein localises to the cell inner membrane. The catalysed reaction is L-methionine(out) + ATP + H2O = L-methionine(in) + ADP + phosphate + H(+). It catalyses the reaction D-methionine(out) + ATP + H2O = D-methionine(in) + ADP + phosphate + H(+). Part of the ABC transporter complex MetNIQ involved in methionine import. Responsible for energy coupling to the transport system. This Bradyrhizobium diazoefficiens (strain JCM 10833 / BCRC 13528 / IAM 13628 / NBRC 14792 / USDA 110) protein is Methionine import ATP-binding protein MetN.